We begin with the raw amino-acid sequence, 139 residues long: D-ribose pyranase (139 aa).

The active-site Proton donor is the H20. Substrate-binding positions include D28, H106, and 128 to 130 (YAN).

The protein belongs to the RbsD / FucU family. RbsD subfamily. Homodecamer.

It is found in the cytoplasm. The enzyme catalyses beta-D-ribopyranose = beta-D-ribofuranose. It participates in carbohydrate metabolism; D-ribose degradation; D-ribose 5-phosphate from beta-D-ribopyranose: step 1/2. In terms of biological role, catalyzes the interconversion of beta-pyran and beta-furan forms of D-ribose. The chain is D-ribose pyranase from Salmonella typhi.